The primary structure comprises 118 residues: Ribosome-binding factor A (118 aa).

This sequence belongs to the RbfA family. Monomer. Binds 30S ribosomal subunits, but not 50S ribosomal subunits or 70S ribosomes.

It localises to the cytoplasm. In terms of biological role, one of several proteins that assist in the late maturation steps of the functional core of the 30S ribosomal subunit. Associates with free 30S ribosomal subunits (but not with 30S subunits that are part of 70S ribosomes or polysomes). Required for efficient processing of 16S rRNA. May interact with the 5'-terminal helix region of 16S rRNA. The sequence is that of Ribosome-binding factor A from Bacillus cereus (strain AH187).